We begin with the raw amino-acid sequence, 542 residues long: CTP synthase (542 aa).

An amidoligase domain region spans residues 1-265 (MTRYIFVTGG…DDFVVERFGL (265 aa)). S13 is a binding site for CTP. A UTP-binding site is contributed by S13. Residues 14-19 (SLGKGI) and D71 each bind ATP. Mg(2+)-binding residues include D71 and E139. CTP-binding positions include 146 to 148 (DIE), 186 to 191 (KTKPTQ), and K222. Residues 186–191 (KTKPTQ) and K222 each bind UTP. A Glutamine amidotransferase type-1 domain is found at 290 to 541 (TIAMVGKYME…VKAALAQKNK (252 aa)). L-glutamine is bound at residue G351. Catalysis depends on C378, which acts as the Nucleophile; for glutamine hydrolysis. Residues 379-382 (LGMQ), E402, and R469 each bind L-glutamine. Residues H514 and E516 contribute to the active site.

Belongs to the CTP synthase family. As to quaternary structure, homotetramer.

The enzyme catalyses UTP + L-glutamine + ATP + H2O = CTP + L-glutamate + ADP + phosphate + 2 H(+). It carries out the reaction L-glutamine + H2O = L-glutamate + NH4(+). It catalyses the reaction UTP + NH4(+) + ATP = CTP + ADP + phosphate + 2 H(+). It functions in the pathway pyrimidine metabolism; CTP biosynthesis via de novo pathway; CTP from UDP: step 2/2. Allosterically activated by GTP, when glutamine is the substrate; GTP has no effect on the reaction when ammonia is the substrate. The allosteric effector GTP functions by stabilizing the protein conformation that binds the tetrahedral intermediate(s) formed during glutamine hydrolysis. Inhibited by the product CTP, via allosteric rather than competitive inhibition. In terms of biological role, catalyzes the ATP-dependent amination of UTP to CTP with either L-glutamine or ammonia as the source of nitrogen. Regulates intracellular CTP levels through interactions with the four ribonucleotide triphosphates. The protein is CTP synthase of Pseudomonas putida (strain ATCC 700007 / DSM 6899 / JCM 31910 / BCRC 17059 / LMG 24140 / F1).